The chain runs to 829 residues: Periplasmic nitrate reductase (829 aa).

The tat-type signal signal peptide spans 1–30; it reads MKMTRRAFVKANAAASAAAVAGITLPASAA. A 4Fe-4S Mo/W bis-MGD-type domain is found at 41–97; that stretch reads ITWDKAPCRFCGTGCSVLVGTQNGKVVATQGDPEAPVNKGLNCIKGYFLSKIMYGQD. Positions 48, 51, 55, and 83 each coordinate [4Fe-4S] cluster. Mo-bis(molybdopterin guanine dinucleotide) is bound by residues K85, Q152, N177, C181, 214-221, 245-249, 264-266, M374, Q378, N484, 510-511, K533, D560, and 718-727; these read WGSNMAEM, STYYH, QSD, SD, and TGRVLEHWHT. Residue F794 participates in substrate binding. Mo-bis(molybdopterin guanine dinucleotide) contacts are provided by N802 and K819.

The protein belongs to the prokaryotic molybdopterin-containing oxidoreductase family. NasA/NapA/NarB subfamily. As to quaternary structure, component of the periplasmic nitrate reductase NapAB complex composed of NapA and NapB. [4Fe-4S] cluster is required as a cofactor. Mo-bis(molybdopterin guanine dinucleotide) serves as cofactor. In terms of processing, predicted to be exported by the Tat system. The position of the signal peptide cleavage has not been experimentally proven.

It is found in the periplasm. It carries out the reaction 2 Fe(II)-[cytochrome] + nitrate + 2 H(+) = 2 Fe(III)-[cytochrome] + nitrite + H2O. Functionally, catalytic subunit of the periplasmic nitrate reductase complex NapAB. Receives electrons from NapB and catalyzes the reduction of nitrate to nitrite. The polypeptide is Periplasmic nitrate reductase (Vibrio parahaemolyticus serotype O3:K6 (strain RIMD 2210633)).